A 278-amino-acid chain; its full sequence is Glutamate racemase (278 aa).

Substrate-binding positions include 25 to 26 and 57 to 58; these read DS and YG. C89 serves as the catalytic Proton donor/acceptor. A substrate-binding site is contributed by 90–91; that stretch reads NT. C204 (proton donor/acceptor) is an active-site residue. Residue 205–206 coordinates substrate; that stretch reads TH.

The protein belongs to the aspartate/glutamate racemases family.

The catalysed reaction is L-glutamate = D-glutamate. The protein operates within cell wall biogenesis; peptidoglycan biosynthesis. Its function is as follows. Provides the (R)-glutamate required for cell wall biosynthesis. This chain is Glutamate racemase, found in Brucella anthropi (strain ATCC 49188 / DSM 6882 / CCUG 24695 / JCM 21032 / LMG 3331 / NBRC 15819 / NCTC 12168 / Alc 37) (Ochrobactrum anthropi).